A 216-amino-acid polypeptide reads, in one-letter code: MAFDRQKLVEAVKEAKARAKPRNFTQTVEMAVNLKDVDLRKPENRFKLEVVLPHGRGKEPKIAVIADGAVAEAAKKLGLDVISGEELEELAKSPRQARKLAKKYDFFIAAAPLMPKIGRYLGRYLGPRNKMPVVVPPTMTNLEPIVEKLKKTVRIQLKNNPVVHAPIGTEDMDDEKLAENAEAVLNAIINKLERGENQVKSVYIKTTMGPAVKVER.

The protein belongs to the universal ribosomal protein uL1 family. In terms of assembly, part of the 50S ribosomal subunit.

Binds directly to 23S rRNA. Probably involved in E site tRNA release. In terms of biological role, protein L1 is also a translational repressor protein, it controls the translation of its operon by binding to its mRNA. In Thermococcus kodakarensis (strain ATCC BAA-918 / JCM 12380 / KOD1) (Pyrococcus kodakaraensis (strain KOD1)), this protein is Large ribosomal subunit protein uL1.